We begin with the raw amino-acid sequence, 278 residues long: HTH-type transcriptional activator RhaS (278 aa).

The HTH araC/xylS-type domain occupies 174–272 (NQLMAWLEEH…NWSPRDIRQG (99 aa)). DNA-binding regions (H-T-H motif) lie at residues 191–212 (EAVA…KQHT) and 239–262 (VTEI…RREF).

As to quaternary structure, binds DNA as a dimer.

It localises to the cytoplasm. Its function is as follows. Activates expression of the rhaBAD and rhaT operons. The polypeptide is HTH-type transcriptional activator RhaS (Salmonella schwarzengrund (strain CVM19633)).